Here is a 529-residue protein sequence, read N- to C-terminus: Sodium/hydrogen exchanger 4 (529 aa).

The Cytoplasmic portion of the chain corresponds to 1 to 19 (MSIGLTEFVTNKLAAEHPQ). Residues 20-40 (VIPISVFIAILCLCLVIGHLL) form a helical membrane-spanning segment. Residues 41–45 (EENRW) are Vacuolar-facing. Residues 46 to 66 (VNESITAILVGAASGTVILLI) form a helical membrane-spanning segment. Topologically, residues 67–73 (SKGKSSH) are cytoplasmic. Residues 74–94 (ILVFDEELFFIYLLPPIIFNA) constitute an intramembrane region (helical). The Cytoplasmic portion of the chain corresponds to 95–112 (GFQVKKKKFFHNFLTIMS). Residues 113–133 (FGVIGVFISTVIISFGTWWLF) traverse the membrane as a helical segment. Topologically, residues 134-171 (PKLGFKGLSARDYLAIGTIFSSTDTVCTLQILHQDETP) are vacuolar. The helical transmembrane segment at 172–192 (LLYSLVFGEGVVNDATSVVLF) threads the bilayer. The Cytoplasmic portion of the chain corresponds to 193-214 (NAVQKIQFESLTGWTALQVFGN). Residues 215–235 (FLYLFSTSTLLGIGVGLITSF) form a helical membrane-spanning segment. At 236-250 (VLKTLYFGRHSTTRE) the chain is on the vacuolar side. Residues 251–267 (LAIMVLMAYLSYMLAEL) form a helical membrane-spanning segment. At 268 to 273 (FSLSGI) the chain is on the cytoplasmic side. Residues 274-291 (LTVFFCGVLMSHYASYNV) traverse the membrane as a helical segment. At 292–301 (TESSRITSRH) the chain is on the vacuolar side. Residues 302–322 (VFAMLSFIAETFIFLYVGTDA) traverse the membrane as a helical segment. Residues 323 to 342 (LDFTKWKTSSLSFGGTLGVS) lie on the Cytoplasmic side of the membrane. A helical membrane pass occupies residues 343–363 (GVITALVLLGRAAFVFPLSVL). The Vacuolar portion of the chain corresponds to 364–380 (TNFMNRHTERNESITFK). A glycan (N-linked (GlcNAc...) asparagine) is linked at Asn374. A helical transmembrane segment spans residues 381-401 (HQVIIWWAGLMRGAVSIALAF). At 402–415 (KQFTYSGVTLDPVN) the chain is on the cytoplasmic side. The chain crosses the membrane as a helical span at residues 416–436 (AAMVTNTTIVVLFTTLVFGFL). The Vacuolar portion of the chain corresponds to 437 to 529 (TKPLVNYLLP…GPRRENQPEC (93 aa)).

The protein belongs to the monovalent cation:proton antiporter 1 (CPA1) transporter (TC 2.A.36) family. Expressed at very low levels in roots and shoots.

It localises to the vacuole membrane. The catalysed reaction is Na(+)(in) + H(+)(out) = Na(+)(out) + H(+)(in). It carries out the reaction K(+)(in) + H(+)(out) = K(+)(out) + H(+)(in). Functionally, may act in low affinity electroneutral exchange of protons for cations such as Na(+) or K(+) across membranes. May also exchange Li(+) and Cs(+) with a lower affinity. The polypeptide is Sodium/hydrogen exchanger 4 (NHX4) (Arabidopsis thaliana (Mouse-ear cress)).